The following is a 226-amino-acid chain: PKHD-type hydroxylase Pput_0892 (226 aa).

Residues 78-178 (KVFPPLINCY…RYAAFFWTQS (101 aa)) form the Fe2OG dioxygenase domain. Fe cation is bound by residues His96, Asp98, and His159. Arg169 is a 2-oxoglutarate binding site.

Fe(2+) serves as cofactor. Requires L-ascorbate as cofactor.

This chain is PKHD-type hydroxylase Pput_0892, found in Pseudomonas putida (strain ATCC 700007 / DSM 6899 / JCM 31910 / BCRC 17059 / LMG 24140 / F1).